A 504-amino-acid polypeptide reads, in one-letter code: Protein Dok-7 (504 aa).

The PH domain occupies 4–109 (AALVEGQVKL…WDARIRYALG (106 aa)). Residues 105–210 (RYALGEVHRF…RGISPTKGPF (106 aa)) form the IRS-type PTB domain. 3 disordered regions span residues 210 to 229 (FGLR…TVEE), 249 to 351 (SHAG…YSSS), and 411 to 483 (LCLA…PHAG). Composition is skewed to low complexity over residues 263–279 (LSSS…SASS) and 288–310 (SSSS…AGEA). A compositionally biased stretch (polar residues) spans 331-341 (GRQSSSDSGIA).

Homodimer. Forms a heterotetramer composed of 2 DOK7 and 2 MUSK molecules which facilitates MUSK trans-autophosphorylation on tyrosine residue and activation. Interacts (via IRS-type PTB domain) with MUSK (via cytoplasmic part); requires MUSK phosphorylation. As to expression, preferentially expressed in skeletal muscle and heart. Present in thigh muscle, diaphragm and heart but not in the liver or spleen (at protein level).

Its subcellular location is the cell membrane. The protein localises to the synapse. In terms of biological role, probable muscle-intrinsic activator of MUSK that plays an essential role in neuromuscular synaptogenesis. Acts in aneural activation of MUSK and subsequent acetylcholine receptor (AchR) clustering in myotubes. Induces autophosphorylation of MUSK. The protein is Protein Dok-7 (DOK7) of Homo sapiens (Human).